The chain runs to 403 residues: Chalcone synthase 3 (403 aa).

Residue Cys-170 is part of the active site.

Belongs to the thiolase-like superfamily. Chalcone/stilbene synthases family.

It carries out the reaction (E)-4-coumaroyl-CoA + 3 malonyl-CoA + 3 H(+) = 2',4,4',6'-tetrahydroxychalcone + 3 CO2 + 4 CoA. It functions in the pathway secondary metabolite biosynthesis; flavonoid biosynthesis. Functionally, the primary product of this enzyme is 4,2',4',6'-tetrahydroxychalcone (also termed naringenin-chalcone or chalcone) which can under specific conditions spontaneously isomerize into naringenin. This chain is Chalcone synthase 3 (CHS3), found in Gerbera hybrida (Daisy).